Consider the following 398-residue polypeptide: Serpin-Z2B (398 aa).

An RCL region spans residues 343 to 367 (GTEAAATTIAKVVLRQAPPPSVLDF).

It belongs to the serpin family.

Its function is as follows. Inhibits chymotrypsin, cathepsin G and trypsin in vitro. The sequence is that of Serpin-Z2B from Triticum aestivum (Wheat).